The following is a 329-amino-acid chain: tRNA(Ile)-lysidine synthase, chloroplastic (329 aa).

Residue 32–37 participates in ATP binding; sequence SGGQDS.

This sequence belongs to the tRNA(Ile)-lysidine synthase family.

The protein resides in the plastid. It is found in the chloroplast. The enzyme catalyses cytidine(34) in tRNA(Ile2) + L-lysine + ATP = lysidine(34) in tRNA(Ile2) + AMP + diphosphate + H(+). In terms of biological role, ligates lysine onto the cytidine present at position 34 of the AUA codon-specific tRNA(Ile) that contains the anticodon CAU, in an ATP-dependent manner. Cytidine is converted to lysidine, thus changing the amino acid specificity of the tRNA from methionine to isoleucine. The protein is tRNA(Ile)-lysidine synthase, chloroplastic of Pyropia yezoensis (Susabi-nori).